The chain runs to 157 residues: E3 ubiquitin-protein ligase RHA1B (157 aa).

An RING-type; atypical zinc finger spans residues 85–129 (CTVCLSDFVSDDKIRQLPKCGHVFHHRCLDRWIVDCNKITCPICR).

It carries out the reaction S-ubiquitinyl-[E2 ubiquitin-conjugating enzyme]-L-cysteine + [acceptor protein]-L-lysine = [E2 ubiquitin-conjugating enzyme]-L-cysteine + N(6)-ubiquitinyl-[acceptor protein]-L-lysine.. The protein operates within protein modification; protein ubiquitination. Its function is as follows. Possesses E3 ubiquitin-protein ligase activity when associated with the E2 enzyme UBC8 in vitro. This chain is E3 ubiquitin-protein ligase RHA1B, found in Arabidopsis thaliana (Mouse-ear cress).